The sequence spans 357 residues: Peptide chain release factor 1 (357 aa).

Gln236 carries the post-translational modification N5-methylglutamine.

Belongs to the prokaryotic/mitochondrial release factor family. Methylated by PrmC. Methylation increases the termination efficiency of RF1.

It localises to the cytoplasm. Functionally, peptide chain release factor 1 directs the termination of translation in response to the peptide chain termination codons UAG and UAA. This Mycolicibacterium paratuberculosis (strain ATCC BAA-968 / K-10) (Mycobacterium paratuberculosis) protein is Peptide chain release factor 1.